Reading from the N-terminus, the 274-residue chain is Nitrogenase iron protein (274 aa).

Position 8–15 (8–15) interacts with ATP; the sequence is GKGGIGKS. C94 serves as a coordination point for [4Fe-4S] cluster. R97 is subject to ADP-ribosylarginine; by dinitrogenase reductase ADP-ribosyltransferase. Residue C131 coordinates [4Fe-4S] cluster.

Belongs to the NifH/BchL/ChlL family. As to quaternary structure, homodimer. Requires [4Fe-4S] cluster as cofactor. In terms of processing, the reversible ADP-ribosylation of Arg-97 inactivates the nitrogenase reductase and regulates nitrogenase activity.

The catalysed reaction is N2 + 8 reduced [2Fe-2S]-[ferredoxin] + 16 ATP + 16 H2O = H2 + 8 oxidized [2Fe-2S]-[ferredoxin] + 2 NH4(+) + 16 ADP + 16 phosphate + 6 H(+). Functionally, the key enzymatic reactions in nitrogen fixation are catalyzed by the nitrogenase complex, which has 2 components: the iron protein and the molybdenum-iron protein. The chain is Nitrogenase iron protein from Prosthecochloris aestuarii (strain DSM 271 / SK 413).